The primary structure comprises 428 residues: Enolase (428 aa).

Gln163 is a binding site for (2R)-2-phosphoglycerate. Residue Glu205 is the Proton donor of the active site. Mg(2+) is bound by residues Asp242, Glu285, and Asp312. (2R)-2-phosphoglycerate-binding residues include Lys337, Arg366, Ser367, and Lys388. Lys337 (proton acceptor) is an active-site residue.

This sequence belongs to the enolase family. Mg(2+) serves as cofactor.

Its subcellular location is the cytoplasm. The protein resides in the secreted. The protein localises to the cell surface. The enzyme catalyses (2R)-2-phosphoglycerate = phosphoenolpyruvate + H2O. It functions in the pathway carbohydrate degradation; glycolysis; pyruvate from D-glyceraldehyde 3-phosphate: step 4/5. Its function is as follows. Catalyzes the reversible conversion of 2-phosphoglycerate (2-PG) into phosphoenolpyruvate (PEP). It is essential for the degradation of carbohydrates via glycolysis. The polypeptide is Enolase (Erythrobacter litoralis (strain HTCC2594)).